Consider the following 354-residue polypeptide: UDP-N-acetylglucosamine--N-acetylmuramyl-(pentapeptide) pyrophosphoryl-undecaprenol N-acetylglucosamine transferase (354 aa).

Residues 11-13 (TAG), arginine 164, serine 194, and glutamine 289 each bind UDP-N-acetyl-alpha-D-glucosamine.

This sequence belongs to the glycosyltransferase 28 family. MurG subfamily.

It localises to the cell membrane. The enzyme catalyses di-trans,octa-cis-undecaprenyl diphospho-N-acetyl-alpha-D-muramoyl-L-alanyl-D-glutamyl-meso-2,6-diaminopimeloyl-D-alanyl-D-alanine + UDP-N-acetyl-alpha-D-glucosamine = di-trans,octa-cis-undecaprenyl diphospho-[N-acetyl-alpha-D-glucosaminyl-(1-&gt;4)]-N-acetyl-alpha-D-muramoyl-L-alanyl-D-glutamyl-meso-2,6-diaminopimeloyl-D-alanyl-D-alanine + UDP + H(+). It functions in the pathway cell wall biogenesis; peptidoglycan biosynthesis. Cell wall formation. Catalyzes the transfer of a GlcNAc subunit on undecaprenyl-pyrophosphoryl-MurNAc-pentapeptide (lipid intermediate I) to form undecaprenyl-pyrophosphoryl-MurNAc-(pentapeptide)GlcNAc (lipid intermediate II). This is UDP-N-acetylglucosamine--N-acetylmuramyl-(pentapeptide) pyrophosphoryl-undecaprenol N-acetylglucosamine transferase from Clostridium botulinum (strain Langeland / NCTC 10281 / Type F).